The following is a 433-amino-acid chain: Trigger factor (433 aa).

The PPIase FKBP-type domain occupies 163 to 248 (GDTVNIDFSG…VNEIKFKEVP (86 aa)).

This sequence belongs to the FKBP-type PPIase family. Tig subfamily.

The protein resides in the cytoplasm. It catalyses the reaction [protein]-peptidylproline (omega=180) = [protein]-peptidylproline (omega=0). Functionally, involved in protein export. Acts as a chaperone by maintaining the newly synthesized protein in an open conformation. Functions as a peptidyl-prolyl cis-trans isomerase. This chain is Trigger factor, found in Staphylococcus aureus (strain Newman).